Reading from the N-terminus, the 332-residue chain is MKIALDAMSGDFAPISTVKGAIEALEEIEGLQVILVGKEGIIKEELKKYKYDTNRIEIKNADEVIVMTDDPVKAVREKKDSSMNVCIDLVKEKLAQASVSCGNTGALLASSQLKLKRIKGVLRPAIAVLFPNKKDSGTLFLDLGANSDSKPEFLNQFATMGSKYMEIFSGKKNPKVALLNIGEEETKGNELTRETYALLKENKDIDFYGNIESTKIMEGDVDVVVTDGYTGNILLKTSEGIGKFIFHIVKESIMESWISKLGALLVKGAMKKVKKKTEASEYGGAIFLGLSELSLKAHGNSDSRAIKNALKVASKFIELNFIEELRKTMEVE.

Belongs to the PlsX family. As to quaternary structure, homodimer. Probably interacts with PlsY.

It localises to the cytoplasm. It carries out the reaction a fatty acyl-[ACP] + phosphate = an acyl phosphate + holo-[ACP]. It functions in the pathway lipid metabolism; phospholipid metabolism. Functionally, catalyzes the reversible formation of acyl-phosphate (acyl-PO(4)) from acyl-[acyl-carrier-protein] (acyl-ACP). This enzyme utilizes acyl-ACP as fatty acyl donor, but not acyl-CoA. The protein is Phosphate acyltransferase of Fusobacterium nucleatum subsp. nucleatum (strain ATCC 25586 / DSM 15643 / BCRC 10681 / CIP 101130 / JCM 8532 / KCTC 2640 / LMG 13131 / VPI 4355).